A 160-amino-acid polypeptide reads, in one-letter code: SsrA-binding protein (160 aa).

The protein belongs to the SmpB family.

Its subcellular location is the cytoplasm. Required for rescue of stalled ribosomes mediated by trans-translation. Binds to transfer-messenger RNA (tmRNA), required for stable association of tmRNA with ribosomes. tmRNA and SmpB together mimic tRNA shape, replacing the anticodon stem-loop with SmpB. tmRNA is encoded by the ssrA gene; the 2 termini fold to resemble tRNA(Ala) and it encodes a 'tag peptide', a short internal open reading frame. During trans-translation Ala-aminoacylated tmRNA acts like a tRNA, entering the A-site of stalled ribosomes, displacing the stalled mRNA. The ribosome then switches to translate the ORF on the tmRNA; the nascent peptide is terminated with the 'tag peptide' encoded by the tmRNA and targeted for degradation. The ribosome is freed to recommence translation, which seems to be the essential function of trans-translation. This Mycobacterium bovis (strain ATCC BAA-935 / AF2122/97) protein is SsrA-binding protein.